A 613-amino-acid polypeptide reads, in one-letter code: DNA mismatch repair protein MutL (613 aa).

It belongs to the DNA mismatch repair MutL/HexB family.

This protein is involved in the repair of mismatches in DNA. It is required for dam-dependent methyl-directed DNA mismatch repair. May act as a 'molecular matchmaker', a protein that promotes the formation of a stable complex between two or more DNA-binding proteins in an ATP-dependent manner without itself being part of a final effector complex. The polypeptide is DNA mismatch repair protein MutL (Bradyrhizobium sp. (strain ORS 278)).